The sequence spans 63 residues: Beta-defensin 5 (63 aa).

The N-terminal stretch at 1–22 (MRIHYLLFSFLLVLLSPLSVFT) is a signal peptide. The residue at position 23 (Gln23) is a Pyrrolidone carboxylic acid. Cystine bridges form between Cys31/Cys59, Cys38/Cys52, and Cys42/Cys60.

The protein belongs to the beta-defensin family.

It is found in the secreted. In terms of biological role, has antibacterial activity. The sequence is that of Beta-defensin 5 (Defb5) from Rattus norvegicus (Rat).